We begin with the raw amino-acid sequence, 401 residues long: 8-amino-7-oxononanoate synthase (401 aa).

Residue R24 participates in substrate binding. 111–112 (GF) provides a ligand contact to pyridoxal 5'-phosphate. Residue H137 participates in substrate binding. 3 residues coordinate pyridoxal 5'-phosphate: S183, H211, and T240. At K243 the chain carries N6-(pyridoxal phosphate)lysine. Substrate is bound at residue T357.

The protein belongs to the class-II pyridoxal-phosphate-dependent aminotransferase family. BioF subfamily. As to quaternary structure, homodimer. Requires pyridoxal 5'-phosphate as cofactor.

It catalyses the reaction 6-carboxyhexanoyl-[ACP] + L-alanine + H(+) = (8S)-8-amino-7-oxononanoate + holo-[ACP] + CO2. The protein operates within cofactor biosynthesis; biotin biosynthesis. Catalyzes the decarboxylative condensation of pimeloyl-[acyl-carrier protein] and L-alanine to produce 8-amino-7-oxononanoate (AON), [acyl-carrier protein], and carbon dioxide. This is 8-amino-7-oxononanoate synthase from Xanthomonas euvesicatoria pv. vesicatoria (strain 85-10) (Xanthomonas campestris pv. vesicatoria).